The primary structure comprises 120 residues: MPNKQFRVERLAQQIQREVDDILLKRVRDPRVNGVTVTGVDVTGDLQQATIYYTILSKLASDAEKTQTGLDKATGLVRSELGSRLNIFKAPEIKFVRDPSIEYGSRIDELLNELHKNNEL.

This sequence belongs to the RbfA family. In terms of assembly, monomer. Binds 30S ribosomal subunits, but not 50S ribosomal subunits or 70S ribosomes.

The protein resides in the cytoplasm. One of several proteins that assist in the late maturation steps of the functional core of the 30S ribosomal subunit. Associates with free 30S ribosomal subunits (but not with 30S subunits that are part of 70S ribosomes or polysomes). Required for efficient processing of 16S rRNA. May interact with the 5'-terminal helix region of 16S rRNA. This chain is Ribosome-binding factor A, found in Limosilactobacillus fermentum (strain NBRC 3956 / LMG 18251) (Lactobacillus fermentum).